Reading from the N-terminus, the 233-residue chain is Glucosamine-6-phosphate deaminase (233 aa).

Asp62 serves as the catalytic Proton acceptor; for enolization step. Asn128 serves as the catalytic For ring-opening step. His130 (proton acceptor; for ring-opening step) is an active-site residue. Residue Glu135 is the For ring-opening step of the active site.

The protein belongs to the glucosamine/galactosamine-6-phosphate isomerase family. NagB subfamily.

It catalyses the reaction alpha-D-glucosamine 6-phosphate + H2O = beta-D-fructose 6-phosphate + NH4(+). It participates in amino-sugar metabolism; N-acetylneuraminate degradation; D-fructose 6-phosphate from N-acetylneuraminate: step 5/5. Catalyzes the reversible isomerization-deamination of glucosamine 6-phosphate (GlcN6P) to form fructose 6-phosphate (Fru6P) and ammonium ion. In Leuconostoc citreum (strain KM20), this protein is Glucosamine-6-phosphate deaminase.